A 658-amino-acid chain; its full sequence is A-type ATP synthase subunit I (658 aa).

Transmembrane regions (helical) follow at residues 383-403 (MAFV…YGII), 427-447 (IIMM…NGFI), 475-495 (ILIM…ILGA), 507-526 (ALGS…LYLV), 530-552 (IFGA…LFGL), 568-588 (LLAL…LTGL), and 591-611 (EMIP…GHIA).

The protein belongs to the V-ATPase 116 kDa subunit family. As to quaternary structure, has multiple subunits with at least A(3), B(3), C, D, E, F, H, I and proteolipid K(x).

The protein resides in the cell membrane. In terms of biological role, component of the A-type ATP synthase that produces ATP from ADP in the presence of a proton gradient across the membrane. This is A-type ATP synthase subunit I from Methanothermobacter thermautotrophicus (strain ATCC 29096 / DSM 1053 / JCM 10044 / NBRC 100330 / Delta H) (Methanobacterium thermoautotrophicum).